The sequence spans 262 residues: Transmembrane protein 81 (262 aa).

Positions 1–30 (MKAVATVFICGSLVLITYLPLVVTSPQTLA) are cleaved as a signal peptide. Over 31 to 225 (IPEKLRQAVG…HLPGWRKKVS (195 aa)) the chain is Extracellular. N-linked (GlcNAc...) asparagine glycosylation occurs at N45. The region spanning 83-171 (TNWICGMLHF…VQQLKNLKLV (89 aa)) is the Ig-like domain. C104 and C160 are oxidised to a cystine. N211 is a glycosylation site (N-linked (GlcNAc...) asparagine). The chain crosses the membrane as a helical span at residues 226–246 (LALGVGIAAGVVGGVLVNVAL). Residues 247–262 (CRVLGGTGGNGNLSSL) are Cytoplasmic-facing.

In terms of assembly, forms a complex with IZUMO1 and SPACA6 on spermatocyte cell membrane required for fertilization.

The protein localises to the cell membrane. In terms of biological role, essential fertilization factor required for male fertility. Part of a conserved trimeric sperm complex with the essential fertilization factors IZUMO1 and SPACA6 which bridges sperm and oocyte membranes during fertilization by binding to IZUMO1R/JUNO on the oocyte. This is Transmembrane protein 81 (Tmem81) from Rattus norvegicus (Rat).